Reading from the N-terminus, the 180-residue chain is MSSLTDTEKKMAAALEFFHKEVRSFRTGKANPALVETVTVDVYGTTMRLSDLASISVADTRQLVISPYDANNVSAISKGIIAANLNLQPDVEGTIVRIKVPEPTAEYRNEVIKQLRRKSEEAKVAIRNIRRESNDKLKKDSDLTEDAVKGMEKKVQELTDKFCKQIDEITKQKEAELSSI.

Belongs to the RRF family.

It is found in the cytoplasm. In terms of biological role, responsible for the release of ribosomes from messenger RNA at the termination of protein biosynthesis. May increase the efficiency of translation by recycling ribosomes from one round of translation to another. The protein is Ribosome-recycling factor of Chlamydia caviae (strain ATCC VR-813 / DSM 19441 / 03DC25 / GPIC) (Chlamydophila caviae).